The following is a 719-amino-acid chain: MPLLFILAELAMLFARLDSEGICLHITVPQKIEPRKGGDAEGKVTYVITIDGKPYSLHLRNHSFLSQNFLVYTYNETGSLYSDSSHFLAHCHYRGYVDEVPNSIVTLSICSGLRGFLQLENVSYGIEPLESSARFEHIVYQVKSDSSMLAGNDSHVWQIDQLDKGHFNEQDKNHSQLLPQSLKLHIIVGKFLFDYMGSDIMAITQKIFQIIGLVNAMLTQLKLSVVLASLELWSDKNHISTDGNATDILQRLLDWKRDYLTLQSNEITHLLIYRRRPKYIGAASPGEICSKSYVAGVGMYPEDIGLEGFSVVITQLIGLHIGLTYDDNIRNCSCPSAPCIMQQGALSSSGKKTFSNCSLHDYMHYVSNFDTQCLGDLSNVHVLQPNQAVCGNGIMEAGEECDCGNETECQFKECCDHETCRLKGSAQCGSGACCMPTCELSASGTPCRKAVDPECDFTEYCDGSSSHCVPDTFALNGHLCRLGSAYCYNGRCQALNDQCVSLFGKGSQGASYACFEKVNSPRENLANCDSKDSYSVPCGQQDVLCGKLACFRPPKNYKSPSQSVVYSYVHDSVCLSILPGLSMRSDGRDSAYVADGTVCGPQMYCINGTCKEVNFTGNDCNATKKCKGNGICNNFGNCQCFPDYRPPDCNLQIGSPGGSIDDGNTLRTESAFATKRLSKNEDSWVILGFFIFLPFIVTFLVGIMKRNERKIVPQGEHKI.

Residues 1 to 19 form the signal peptide; the sequence is MPLLFILAELAMLFARLDS. Residues 20–179 constitute a propeptide that is removed on maturation; sequence EGICLHITVP…QDKNHSQLLP (160 aa). Asn-61, Asn-75, Asn-121, Asn-152, Asn-173, Asn-244, and Asn-331 each carry an N-linked (GlcNAc...) asparagine glycan. At 173–683 the chain is on the extracellular side; that stretch reads NHSQLLPQSL…TKRLSKNEDS (511 aa). A Peptidase M12B domain is found at 180–378; the sequence is QSLKLHIIVG…FDTQCLGDLS (199 aa). Cystine bridges form between Cys-289–Cys-373, Cys-332–Cys-357, and Cys-334–Cys-339. N-linked (GlcNAc...) asparagine glycosylation is found at Asn-356 and Asn-405. The 90-residue stretch at 387–476 folds into the Disintegrin domain; the sequence is QAVCGNGIME…HCVPDTFALN (90 aa). Cys-447 and Cys-468 are oxidised to a cystine. 3 N-linked (GlcNAc...) asparagine glycosylation sites follow: Asn-607, Asn-614, and Asn-621. Positions 616–650 constitute an EGF-like domain; sequence TGNDCNATKKCKGNGICNNFGNCQCFPDYRPPDCN. Disulfide bonds link Cys-620–Cys-632, Cys-626–Cys-638, and Cys-640–Cys-649. Residues 684 to 704 form a helical membrane-spanning segment; the sequence is WVILGFFIFLPFIVTFLVGIM. At 705 to 719 the chain is on the cytoplasmic side; the sequence is KRNERKIVPQGEHKI.

Post-translationally, the prodomain and the metalloprotease-like domain are cleaved during the epididymal maturation of the spermatozoa. As to expression, expressed specifically in testis.

Its subcellular location is the membrane. Its function is as follows. Sperm surface membrane protein that may be involved in spermatogenesis and fertilization. This is a non catalytic metalloprotease-like protein. The sequence is that of Disintegrin and metalloproteinase domain-containing protein 18 (Adam18) from Mus musculus (Mouse).